Consider the following 255-residue polypeptide: Large ribosomal subunit protein uL4 (255 aa).

This sequence belongs to the universal ribosomal protein uL4 family. As to quaternary structure, part of the 50S ribosomal subunit.

In terms of biological role, one of the primary rRNA binding proteins, this protein initially binds near the 5'-end of the 23S rRNA. It is important during the early stages of 50S assembly. It makes multiple contacts with different domains of the 23S rRNA in the assembled 50S subunit and ribosome. Its function is as follows. Forms part of the polypeptide exit tunnel. The protein is Large ribosomal subunit protein uL4 of Thermoplasma acidophilum (strain ATCC 25905 / DSM 1728 / JCM 9062 / NBRC 15155 / AMRC-C165).